The following is a 428-amino-acid chain: MQELHLLWWALLLGLAQACPEPCDCGEKYGFQIADCAYRDLEAVPPGFPANVTALSLSANRLPGLPEGAFREVPLLQSLWLAHNEIRMVAAGALASLSHLKSLDLSHNLISDFAWSDLHNLSALQLLKMDSNELTFIPRDAFRSLHALRSLQLNHNRLHTLAEGTFTPLTALSHLQINDNPFDCTCGIVWLKTWALATAVSIPEQDNIACTSPHVLKGTPLSRLPPLPCSAPSVQLSYQPSQDGAELRPGFVLALHCDVDGQPAPQLHWHIQIPSGIVEITSPNVGTDGRALPGTPVASSQPRFQAFANGSLLIPDFGKLEEGTYSCLATNELGSAESSVDVALATPGEGGEDTLGRRFHGKAVEGKGCYTVDNEVQPSGPEDNVVIIYLSRAGNPEAAVAEGVPGQLPPGLLLLGQSLLLLFFLTSS.

An N-terminal signal peptide occupies residues 1 to 18; sequence MQELHLLWWALLLGLAQA. Residues 19-50 enclose the LRRNT domain; it reads CPEPCDCGEKYGFQIADCAYRDLEAVPPGFPA. Asn-51 is a glycosylation site (N-linked (GlcNAc...) asparagine). LRR repeat units follow at residues 51–72, 75–96, 99–122, 123–144, and 147–168; these read NVTALSLSANRLPGLPEGAFRE, LLQSLWLAHNEIRMVAAGALAS, HLKSLDLSHNLISDFAWSDLHNLS, ALQLLKMDSNELTFIPRDAFRS, and ALRSLQLNHNRLHTLAEGTFTP. The LRRCT domain occupies 180–231; that stretch reads NPFDCTCGIVWLKTWALATAVSIPEQDNIACTSPHVLKGTPLSRLPPLPCSA. Positions 232–343 constitute an Ig-like domain; the sequence is PSVQLSYQPS…GSAESSVDVA (112 aa). Residues Cys-257 and Cys-327 are joined by a disulfide bond. An N-linked (GlcNAc...) asparagine glycan is attached at Asn-309.

Its subcellular location is the secreted. This is Immunoglobulin superfamily containing leucine-rich repeat protein (ISLR) from Pongo abelii (Sumatran orangutan).